Consider the following 278-residue polypeptide: Checkpoint protein HUS1B (278 aa).

The protein belongs to the HUS1 family. In terms of assembly, interacts with RAD1 and RAD9B. In terms of tissue distribution, expressed strongly in testis, less in spleen, thymus, prostate, colon and leukocytes.

The sequence is that of Checkpoint protein HUS1B (HUS1B) from Homo sapiens (Human).